A 356-amino-acid polypeptide reads, in one-letter code: Nitric oxide synthase oxygenase (356 aa).

Cysteine 63 contacts heme.

Belongs to the NOS family. Bacterial NOS oxygenase subfamily. In terms of assembly, homodimer. Forms a complex with trpS2; one homodimer of trpS2 binds one homodimer of nos. Heme is required as a cofactor. (6S)-5,6,7,8-tetrahydrofolate serves as cofactor.

It carries out the reaction 3 reduced [flavodoxin] + 2 L-arginine + 4 O2 = 3 oxidized [flavodoxin] + 2 L-citrulline + 2 nitric oxide + 4 H2O + 5 H(+). With respect to regulation, nitric oxide synthase activity is increased by trpS2. In terms of biological role, catalyzes the production of nitric oxide. The complex between TrpRS II and nitric oxide synthase oxygenase catalyzes the regioselective nitration of tryptophan at the 4-position. This Deinococcus radiodurans (strain ATCC 13939 / DSM 20539 / JCM 16871 / CCUG 27074 / LMG 4051 / NBRC 15346 / NCIMB 9279 / VKM B-1422 / R1) protein is Nitric oxide synthase oxygenase (nos).